The sequence spans 517 residues: ATP synthase subunit alpha 1 (517 aa).

174 to 181 (GDRQTGKT) is a binding site for ATP.

This sequence belongs to the ATPase alpha/beta chains family. F-type ATPases have 2 components, CF(1) - the catalytic core - and CF(0) - the membrane proton channel. CF(1) has five subunits: alpha(3), beta(3), gamma(1), delta(1), epsilon(1). CF(0) has three main subunits: a(1), b(2) and c(9-12). The alpha and beta chains form an alternating ring which encloses part of the gamma chain. CF(1) is attached to CF(0) by a central stalk formed by the gamma and epsilon chains, while a peripheral stalk is formed by the delta and b chains.

Its subcellular location is the cell inner membrane. The enzyme catalyses ATP + H2O + 4 H(+)(in) = ADP + phosphate + 5 H(+)(out). In terms of biological role, produces ATP from ADP in the presence of a proton gradient across the membrane. The alpha chain is a regulatory subunit. The chain is ATP synthase subunit alpha 1 from Polaromonas naphthalenivorans (strain CJ2).